The primary structure comprises 160 residues: Cyclic pyranopterin monophosphate synthase (160 aa).

Residues 77 to 79 (MCH) and 114 to 115 (ME) contribute to the substrate site. D129 is an active-site residue.

It belongs to the MoaC family. Homohexamer; trimer of dimers.

It carries out the reaction (8S)-3',8-cyclo-7,8-dihydroguanosine 5'-triphosphate = cyclic pyranopterin phosphate + diphosphate. It functions in the pathway cofactor biosynthesis; molybdopterin biosynthesis. Catalyzes the conversion of (8S)-3',8-cyclo-7,8-dihydroguanosine 5'-triphosphate to cyclic pyranopterin monophosphate (cPMP). The protein is Cyclic pyranopterin monophosphate synthase of Listeria monocytogenes serotype 4b (strain F2365).